The sequence spans 486 residues: Cardiolipin synthase A (486 aa).

2 helical membrane-spanning segments follow: residues Thr-3–Val-23 and Met-38–Phe-58. 2 consecutive PLD phosphodiesterase domains span residues Met-219–Arg-246 and Glu-399–Ser-426. Catalysis depends on residues His-224, Lys-226, Asp-231, His-404, Lys-406, and Asp-411.

Belongs to the phospholipase D family. Cardiolipin synthase subfamily. ClsA sub-subfamily.

It localises to the cell inner membrane. The catalysed reaction is 2 a 1,2-diacyl-sn-glycero-3-phospho-(1'-sn-glycerol) = a cardiolipin + glycerol. In terms of biological role, catalyzes the reversible phosphatidyl group transfer from one phosphatidylglycerol molecule to another to form cardiolipin (CL) (diphosphatidylglycerol) and glycerol. The chain is Cardiolipin synthase A from Citrobacter koseri (strain ATCC BAA-895 / CDC 4225-83 / SGSC4696).